A 226-amino-acid polypeptide reads, in one-letter code: Cytidylate kinase (226 aa).

An ATP-binding site is contributed by 12–20 (GPSGAGKGT).

Belongs to the cytidylate kinase family. Type 1 subfamily.

The protein localises to the cytoplasm. The enzyme catalyses CMP + ATP = CDP + ADP. The catalysed reaction is dCMP + ATP = dCDP + ADP. This chain is Cytidylate kinase, found in Colwellia psychrerythraea (strain 34H / ATCC BAA-681) (Vibrio psychroerythus).